The primary structure comprises 84 residues: Putative membrane protein insertion efficiency factor (84 aa).

The segment at 64–84 is disordered; the sequence is GGSGYDPPPPRHQPRKWKCEE. Positions 75-84 are enriched in basic residues; it reads HQPRKWKCEE.

Belongs to the UPF0161 family.

It localises to the cell inner membrane. In terms of biological role, could be involved in insertion of integral membrane proteins into the membrane. This is Putative membrane protein insertion efficiency factor from Caulobacter vibrioides (strain ATCC 19089 / CIP 103742 / CB 15) (Caulobacter crescentus).